The primary structure comprises 33 residues: Cytochrome b6-f complex subunit 8 (33 aa).

Residues 2 to 22 (IFTLGWASLAAIFTFSIAMVV) traverse the membrane as a helical segment.

The protein belongs to the PetN family. In terms of assembly, the 4 large subunits of the cytochrome b6-f complex are cytochrome b6, subunit IV (17 kDa polypeptide, PetD), cytochrome f and the Rieske protein, while the 4 small subunits are PetG, PetL, PetM and PetN. The complex functions as a dimer.

It is found in the cellular thylakoid membrane. Its function is as follows. Component of the cytochrome b6-f complex, which mediates electron transfer between photosystem II (PSII) and photosystem I (PSI), cyclic electron flow around PSI, and state transitions. In Prochlorococcus marinus (strain NATL2A), this protein is Cytochrome b6-f complex subunit 8.